Consider the following 197-residue polypeptide: MNLIPTVIEQSSRGERAYDIYSRLLKDRIIMLSGPIDDNVANSVIAQLLFLDAQDSEKDIYLYINSPGGSVSAGLAIFDTMNFVKADVQTIVLGMAASMGSFLLTAGQKGKRFALPNAEIMIHQPLGGAQGQATEIEIAARHILDTRQRLNSILAERTGQPIEVIERDTDRDNYMTAEQAKEYGLIDEVMENSSALN.

Residue serine 98 is the Nucleophile of the active site. The active site involves histidine 123.

This sequence belongs to the peptidase S14 family. In terms of assembly, fourteen ClpP subunits assemble into 2 heptameric rings which stack back to back to give a disk-like structure with a central cavity, resembling the structure of eukaryotic proteasomes.

Its subcellular location is the cytoplasm. The catalysed reaction is Hydrolysis of proteins to small peptides in the presence of ATP and magnesium. alpha-casein is the usual test substrate. In the absence of ATP, only oligopeptides shorter than five residues are hydrolyzed (such as succinyl-Leu-Tyr-|-NHMec, and Leu-Tyr-Leu-|-Tyr-Trp, in which cleavage of the -Tyr-|-Leu- and -Tyr-|-Trp bonds also occurs).. In terms of biological role, cleaves peptides in various proteins in a process that requires ATP hydrolysis. Has a chymotrypsin-like activity. Plays a major role in the degradation of misfolded proteins. This chain is ATP-dependent Clp protease proteolytic subunit, found in Enterococcus faecalis (strain ATCC 700802 / V583).